Reading from the N-terminus, the 87-residue chain is MSLLEFFRPQKKTSASLAKERLQIIVAERRSQNDPAPSYLPQLKEDILKVISKYVAIDPAMVDLTFEHKDDDISVLELNVKLPDEEK.

The protein belongs to the MinE family.

In terms of biological role, prevents the cell division inhibition by proteins MinC and MinD at internal division sites while permitting inhibition at polar sites. This ensures cell division at the proper site by restricting the formation of a division septum at the midpoint of the long axis of the cell. The protein is Cell division topological specificity factor of Vibrio vulnificus (strain CMCP6).